We begin with the raw amino-acid sequence, 78 residues long: Protein GPR15LG (78 aa).

An N-terminal signal peptide occupies residues 1–24; that stretch reads MRLLALSGLLCMLLLCFCIFSSEG. 2 cysteine pairs are disulfide-bonded: cysteine 37/cysteine 60 and cysteine 38/cysteine 57.

As to quaternary structure, interacts with SUSD2; the interaction is direct. As to expression, highly abundant in the testis, colon, eye, and tongue. Detected in the epithelial layer of the colon, but not the small intestine.

The protein localises to the secreted. In terms of biological role, highly cationic protein that has multiple functions. Acts as a chemotactic factor that mediates lymphocytes recruitment to epithelia through binding and activation of the G-protein coupled receptor GPR15. May be a tumor suppressor; together with SUSD2 has a growth inhibitory effect on colon cancer cells which includes G1 cell cycle arrest. May regulate keratinocyte proliferation. In addition, through activation of Mas-related G protein-coupled receptors (MRGPRs) contributes to pruritogenesis by activating itch-selective sensory neurons and mast cells degranulation. Has antimicrobial activity against Gram-positive bacteria, including Staphylococcus aureus and Actinomyces spec., and Mycoplasma hominis and lentivirus. The chain is Protein GPR15LG (Gpr15lg) from Mus musculus (Mouse).